We begin with the raw amino-acid sequence, 173 residues long: Lipoprotein signal peptidase (173 aa).

A run of 3 helical transmembrane segments spans residues 11 to 31, 69 to 89, and 93 to 113; these read FGLIFAAVAFLLDQVTKWIVT, TTRWTLVAVTGIVAAAVAFWM, and QAKGDVIALALILGGALGNIV. Active-site residues include aspartate 123 and aspartate 142. Residues 134–154 form a helical membrane-spanning segment; sequence PFMIFNVADACITIGVLLLVA.

This sequence belongs to the peptidase A8 family.

The protein localises to the cell inner membrane. The enzyme catalyses Release of signal peptides from bacterial membrane prolipoproteins. Hydrolyzes -Xaa-Yaa-Zaa-|-(S,diacylglyceryl)Cys-, in which Xaa is hydrophobic (preferably Leu), and Yaa (Ala or Ser) and Zaa (Gly or Ala) have small, neutral side chains.. Its pathway is protein modification; lipoprotein biosynthesis (signal peptide cleavage). Functionally, this protein specifically catalyzes the removal of signal peptides from prolipoproteins. The chain is Lipoprotein signal peptidase from Sphingopyxis alaskensis (strain DSM 13593 / LMG 18877 / RB2256) (Sphingomonas alaskensis).